The following is a 175-amino-acid chain: Transcription factor E (175 aa).

The 86-residue stretch at Glu-3–Pro-88 folds into the HTH TFE/IIEalpha-type domain.

It belongs to the TFE family. In terms of assembly, monomer. Interaction with RNA polymerase subunits RpoF and RpoE is necessary for Tfe stimulatory transcription activity. Able to interact with Tbp and RNA polymerase in the absence of DNA promoter. Interacts both with the preinitiation and elongation complexes.

In terms of biological role, transcription factor that plays a role in the activation of archaeal genes transcribed by RNA polymerase. Facilitates transcription initiation by enhancing TATA-box recognition by TATA-box-binding protein (Tbp), and transcription factor B (Tfb) and RNA polymerase recruitment. Not absolutely required for transcription in vitro, but particularly important in cases where Tbp or Tfb function is not optimal. It dynamically alters the nucleic acid-binding properties of RNA polymerases by stabilizing the initiation complex and destabilizing elongation complexes. Seems to translocate with the RNA polymerase following initiation and acts by binding to the non template strand of the transcription bubble in elongation complexes. The protein is Transcription factor E of Methanococcus maripaludis (strain C7 / ATCC BAA-1331).